Reading from the N-terminus, the 95-residue chain is Putative pterin-4-alpha-carbinolamine dehydratase (95 aa).

This sequence belongs to the pterin-4-alpha-carbinolamine dehydratase family.

It carries out the reaction (4aS,6R)-4a-hydroxy-L-erythro-5,6,7,8-tetrahydrobiopterin = (6R)-L-erythro-6,7-dihydrobiopterin + H2O. This chain is Putative pterin-4-alpha-carbinolamine dehydratase, found in Thermosynechococcus vestitus (strain NIES-2133 / IAM M-273 / BP-1).